The chain runs to 188 residues: MVSISNVSKGAIIRWKGEPHSIESLVHRTPGNLRAFYQASMKNLKTGRNVEYRFSATEQVDVIVTERKKYQYLYRDGEDYVMMDTETFDQINVPEVAIGSASRFIKDAVMVDIVFADDGSILEVELPTFVELEVTETNPASKDDRATSGTKPAIVETGAEVNVPMFIQTGSIIRIDTRSGEYMDRVKK.

Belongs to the elongation factor P family.

It localises to the cytoplasm. Its pathway is protein biosynthesis; polypeptide chain elongation. Involved in peptide bond synthesis. Stimulates efficient translation and peptide-bond synthesis on native or reconstituted 70S ribosomes in vitro. Probably functions indirectly by altering the affinity of the ribosome for aminoacyl-tRNA, thus increasing their reactivity as acceptors for peptidyl transferase. This is Elongation factor P from Chlorobaculum parvum (strain DSM 263 / NCIMB 8327) (Chlorobium vibrioforme subsp. thiosulfatophilum).